A 97-amino-acid chain; its full sequence is Co-chaperonin GroES (97 aa).

The protein belongs to the GroES chaperonin family. Heptamer of 7 subunits arranged in a ring. Interacts with the chaperonin GroEL.

The protein localises to the cytoplasm. Together with the chaperonin GroEL, plays an essential role in assisting protein folding. The GroEL-GroES system forms a nano-cage that allows encapsulation of the non-native substrate proteins and provides a physical environment optimized to promote and accelerate protein folding. GroES binds to the apical surface of the GroEL ring, thereby capping the opening of the GroEL channel. This is Co-chaperonin GroES from Symbiobacterium thermophilum (strain DSM 24528 / JCM 14929 / IAM 14863 / T).